The primary structure comprises 341 residues: Adenylosuccinate synthetase (341 aa).

GTP is bound by residues 12–18 and 42–44; these read GDEGKGK and GHS. The Proton acceptor role is filled by aspartate 13. Positions 13 and 42 each coordinate Mg(2+). IMP is bound by residues 13–16, 40–43, threonine 127, arginine 141, glutamine 179, threonine 194, and arginine 256; these read DEGK and NAGH. The active-site Proton donor is histidine 43. 252-258 provides a ligand contact to substrate; that stretch reads VVTGRKR. Residues arginine 258, 284–286, and 324–326 contribute to the GTP site; these read CID and STG.

This sequence belongs to the adenylosuccinate synthetase family. As to quaternary structure, homodimer. Mg(2+) is required as a cofactor.

The protein resides in the cytoplasm. It carries out the reaction IMP + L-aspartate + GTP = N(6)-(1,2-dicarboxyethyl)-AMP + GDP + phosphate + 2 H(+). Its pathway is purine metabolism; AMP biosynthesis via de novo pathway; AMP from IMP: step 1/2. Plays an important role in the de novo pathway of purine nucleotide biosynthesis. Catalyzes the first committed step in the biosynthesis of AMP from IMP. In Methanosphaera stadtmanae (strain ATCC 43021 / DSM 3091 / JCM 11832 / MCB-3), this protein is Adenylosuccinate synthetase.